The primary structure comprises 393 residues: Calreticulin (393 aa).

An N-terminal signal peptide occupies residues 1 to 16 (MLSILLTLLLSKYALG). N-linked (GlcNAc...) asparagine glycosylation occurs at asparagine 27. A disulfide bond links cysteine 103 and cysteine 135. The an alpha-D-glucoside site is built by tyrosine 107, lysine 109, tyrosine 126, and aspartate 133. Tandem repeats lie at residues 189-200 (VEEGSLEDDWDM), 208-219 (DPNDKKPDDWVD), 225-236 (DPDDKKPDNWDQ), 242-253 (DMDAKKPDDWDD), 257-267 (GEWERPQKDNP), 271-281 (GEWTPRRIDNP), and 285-295 (GEWKPVQIDNP). The 4 X 12 AA approximate repeats stretch occupies residues 189 to 253 (VEEGSLEDDW…DAKKPDDWDD (65 aa)). The interval 194-277 (LEDDWDMLPP…EYKGEWTPRR (84 aa)) is disordered. The span at 202 to 216 (PPKKIDDPNDKKPDD) shows a compositional bias: basic and acidic residues. Residues 217 to 226 (WVDEQFIDDP) are compositionally biased toward acidic residues. 2 stretches are compositionally biased toward basic and acidic residues: residues 227–249 (DDKK…KKPD) and 258–277 (EWER…TPRR). Positions 257–295 (GEWERPQKDNPEYKGEWTPRRIDNPKYKGEWKPVQIDNP) are 3 X 11 AA approximate repeats. Aspartate 315 provides a ligand contact to an alpha-D-glucoside. A disordered region spans residues 351–393 (AEVAKEQSSAKDDKEEAEETKERKELPYDAKASDEPSGDHDEL). The short motif at 390-393 (HDEL) is the Prevents secretion from ER element.

Belongs to the calreticulin family.

The protein localises to the endoplasmic reticulum lumen. Molecular calcium-binding chaperone promoting folding, oligomeric assembly and quality control in the ER via the calreticulin/calnexin cycle. This lectin may interact transiently with almost all of the monoglucosylated glycoproteins that are synthesized in the ER. In Schistosoma mansoni (Blood fluke), this protein is Calreticulin.